The sequence spans 318 residues: UDP-N-acetylenolpyruvoylglucosamine reductase (318 aa).

Residues 38–204 (IGGVCPVIVE…LGIEILLKEG (167 aa)) enclose the FAD-binding PCMH-type domain. R182 is a catalytic residue. The span at 212-229 (SLKDKRDRRNSSQPENKK) shows a compositional bias: basic and acidic residues. The segment at 212 to 232 (SLKDKRDRRNSSQPENKKSAG) is disordered. S233 acts as the Proton donor in catalysis. E310 is an active-site residue.

Belongs to the MurB family. It depends on FAD as a cofactor.

The protein localises to the cytoplasm. It catalyses the reaction UDP-N-acetyl-alpha-D-muramate + NADP(+) = UDP-N-acetyl-3-O-(1-carboxyvinyl)-alpha-D-glucosamine + NADPH + H(+). Its pathway is cell wall biogenesis; peptidoglycan biosynthesis. Cell wall formation. This is UDP-N-acetylenolpyruvoylglucosamine reductase from Leptospira interrogans serogroup Icterohaemorrhagiae serovar copenhageni (strain Fiocruz L1-130).